We begin with the raw amino-acid sequence, 448 residues long: Exodeoxyribonuclease 7 large subunit (448 aa).

It belongs to the XseA family. As to quaternary structure, heterooligomer composed of large and small subunits.

It localises to the cytoplasm. It catalyses the reaction Exonucleolytic cleavage in either 5'- to 3'- or 3'- to 5'-direction to yield nucleoside 5'-phosphates.. Functionally, bidirectionally degrades single-stranded DNA into large acid-insoluble oligonucleotides, which are then degraded further into small acid-soluble oligonucleotides. This is Exodeoxyribonuclease 7 large subunit from Nitrosomonas eutropha (strain DSM 101675 / C91 / Nm57).